We begin with the raw amino-acid sequence, 145 residues long: Putative phosphatidylglycerol/phosphatidylinositol transfer protein DDB_G0282179 (145 aa).

The first 20 residues, 1 to 20, serve as a signal peptide directing secretion; that stretch reads MIKTILLLLINFMLILIVNG. N134 is a glycosylation site (N-linked (GlcNAc...) asparagine).

It belongs to the NPC2 family. As to quaternary structure, monomer.

Its function is as follows. Catalyzes the intermembrane transfer of phosphatidylglycerol and phosphatidylinositol. This is Putative phosphatidylglycerol/phosphatidylinositol transfer protein DDB_G0282179 from Dictyostelium discoideum (Social amoeba).